A 65-amino-acid polypeptide reads, in one-letter code: Gallinacin-1 alpha (65 aa).

An N-terminal signal peptide occupies residues 1–19 (MRIVYLLLPFILLLAQGAA). A propeptide spanning residues 20–25 (GSSQAL) is cleaved from the precursor. Cystine bridges form between cysteine 31/cysteine 59, cysteine 38/cysteine 53, and cysteine 43/cysteine 60.

The protein belongs to the beta-defensin family.

The protein resides in the secreted. It is found in the cytoplasmic granule. Its function is as follows. Has bactericidal activity. Potent activity against E.coli ML-35, L.monocytogenes EGD and C.albicans. In Gallus gallus (Chicken), this protein is Gallinacin-1 alpha.